Consider the following 357-residue polypeptide: Heme A synthase (357 aa).

The next 5 helical transmembrane spans lie at 24 to 44, 110 to 130, 140 to 160, 175 to 195, and 209 to 229; these read LVRY…MVGG, MLAR…WVTG, MLGL…MVAS, IHLT…RGLV, and FAGW…LVAG. H272 provides a ligand contact to heme. 3 helical membrane passes run 274 to 294, 303 to 323, and 325 to 345; these read MFAY…WKQV, TIVL…TLLM, and VPLH…AFAV. H333 is a binding site for heme.

This sequence belongs to the COX15/CtaA family. Type 2 subfamily. In terms of assembly, interacts with CtaB. The cofactor is heme b.

Its subcellular location is the cell membrane. It catalyses the reaction Fe(II)-heme o + 2 A + H2O = Fe(II)-heme a + 2 AH2. It participates in porphyrin-containing compound metabolism; heme A biosynthesis; heme A from heme O: step 1/1. Catalyzes the conversion of heme O to heme A by two successive hydroxylations of the methyl group at C8. The first hydroxylation forms heme I, the second hydroxylation results in an unstable dihydroxymethyl group, which spontaneously dehydrates, resulting in the formyl group of heme A. This Brucella anthropi (strain ATCC 49188 / DSM 6882 / CCUG 24695 / JCM 21032 / LMG 3331 / NBRC 15819 / NCTC 12168 / Alc 37) (Ochrobactrum anthropi) protein is Heme A synthase.